The sequence spans 447 residues: Probable arabinosyltransferase ARAD1 (447 aa).

Residues 1–6 (MARKSS) are Cytoplasmic-facing. Residues 7–29 (LLKRAAIAVVSVIAIYVILNASV) form a helical; Signal-anchor for type II membrane protein membrane-spanning segment. Topologically, residues 30–447 (SRSLPSSSDL…TNQTGLITSI (418 aa)) are lumenal. Low complexity predominate over residues 32–41 (SLPSSSDLPR). The tract at residues 32–52 (SLPSSSDLPRQLIREDDDDEG) is disordered. N-linked (GlcNAc...) asparagine glycans are attached at residues N427, N432, and N439.

Belongs to the glycosyltransferase 47 family. Homodimer and heterodimer with ARAD2. In terms of tissue distribution, expressed in root vasculature, cotyledons, leaves, stems, vascular tissue of sepals, petals and stamens, pollen grains, mature siliques and abscission region of seeds.

It localises to the golgi apparatus membrane. Functionally, probable arabinosyl transferase responsible for the polymerization of arabinose into the arabinan of arabinogalactan. May function as inverting enzyme using UDP-beta-L-arabinopyranoside. May be important for arabinan side chains of rhamnogalacturonan I (RG-I), a major component of pectins. Cell wall pectic arabinans are involved in thigmomorphogenesis response of inflorescence stems to mechanical stress. This chain is Probable arabinosyltransferase ARAD1 (ARAD1), found in Arabidopsis thaliana (Mouse-ear cress).